Reading from the N-terminus, the 436-residue chain is Protein arginine methyltransferase NDUFAF7, mitochondrial (436 aa).

The N-terminal 41 residues, 1–41 (MNALVRRCVARTGIPSIWRRKCFSSGNEPAESNHVTPMLRH), are a transit peptide targeting the mitochondrion. Residues 413–436 (QGGKACQSEAPSTSVPGFDELVWH) are disordered.

This sequence belongs to the NDUFAF7 family. In terms of assembly, interacts with NDUFS2.

The protein localises to the mitochondrion. It carries out the reaction L-arginyl-[protein] + 2 S-adenosyl-L-methionine = N(omega),N(omega)'-dimethyl-L-arginyl-[protein] + 2 S-adenosyl-L-homocysteine + 2 H(+). Arginine methyltransferase involved in the assembly or stability of mitochondrial NADH:ubiquinone oxidoreductase complex (complex I). Acts by mediating symmetric dimethylation of 'Arg-118' of NDUFS2 after it assembles into the complex I, stabilizing the early intermediate complex. This is Protein arginine methyltransferase NDUFAF7, mitochondrial from Rattus norvegicus (Rat).